A 177-amino-acid chain; its full sequence is Endothelin-2 (177 aa).

Positions 1-23 are cleaved as a signal peptide; that stretch reads MPTALCSIALALLVALHEGKSQA. Residues 24 to 45 constitute a propeptide that is removed on maturation; the sequence is ATTPIPEQPAPLPRARGSHLRT. Intrachain disulfides connect Cys48–Cys62 and Cys50–Cys58. Residues 69–177 constitute a propeptide that is removed on maturation; that stretch reads VNTPGQTAPY…RPTHSRQRKR (109 aa). The segment at 95-110 is endothelin-like; sequence CECYSARDPACATFCH. The segment at 155–177 is disordered; it reads HFARQQQKPTRETRPTHSRQRKR.

The protein belongs to the endothelin/sarafotoxin family. Expressed in various organs including heart, lung, liver, kidney, gastrointestinal tract, uterus and ovary, but not in spleen. Within the gastrointestinal tract, gene expression was detected in rumen, a ruminant-specific digestive organ, as well as stomach, duodenum and colon.

Its subcellular location is the secreted. Its function is as follows. Endothelins are endothelium-derived vasoconstrictor peptides. The sequence is that of Endothelin-2 (EDN2) from Bos taurus (Bovine).